Consider the following 234-residue polypeptide: Octanoyltransferase (234 aa).

The BPL/LPL catalytic domain occupies 50-234 (GEAPELVWLL…AFEQVFGPTR (185 aa)). Substrate-binding positions include 88 to 95 (RGGQITYH), 163 to 165 (AIG), and 176 to 178 (GIA). The Acyl-thioester intermediate role is filled by cysteine 194.

The protein belongs to the LipB family.

The protein localises to the cytoplasm. It catalyses the reaction octanoyl-[ACP] + L-lysyl-[protein] = N(6)-octanoyl-L-lysyl-[protein] + holo-[ACP] + H(+). Its pathway is protein modification; protein lipoylation via endogenous pathway; protein N(6)-(lipoyl)lysine from octanoyl-[acyl-carrier-protein]: step 1/2. Functionally, catalyzes the transfer of endogenously produced octanoic acid from octanoyl-acyl-carrier-protein onto the lipoyl domains of lipoate-dependent enzymes. Lipoyl-ACP can also act as a substrate although octanoyl-ACP is likely to be the physiological substrate. This is Octanoyltransferase from Rhodopseudomonas palustris (strain BisA53).